The sequence spans 193 residues: dCTP deaminase (193 aa).

DCTP-binding positions include 110 to 115 (RSSLAR), Asp-128, 136 to 138 (VLE), Tyr-171, Lys-178, and Gln-182. Glu-138 functions as the Proton donor/acceptor in the catalytic mechanism.

This sequence belongs to the dCTP deaminase family. Homotrimer.

It catalyses the reaction dCTP + H2O + H(+) = dUTP + NH4(+). It participates in pyrimidine metabolism; dUMP biosynthesis; dUMP from dCTP (dUTP route): step 1/2. Its function is as follows. Catalyzes the deamination of dCTP to dUTP. The protein is dCTP deaminase of Aeromonas salmonicida (strain A449).